A 274-amino-acid polypeptide reads, in one-letter code: WIMGHMVNKKYQVDEFADLGANAIEFDVTFDSNYKADYTYHKVPCDCGRTCGRYEVFTEFLSYVKNETTPGHPSFREKLVLLQLDLKMSYLTESQSNEAGKDMAKKFLNYYWNRGSNGGRAYILLSIPSIDNYLFLTGFKQQLKTEGFEQYLDKVGVDFSGNEDLDSIVNVLGRLEDEHVWQSDGITNCWTRGISRLQDAIKRRDEDESRYGIKKVYTWTVDYYPSIRYYLRLGIDGVMTNFPNRVEYILNEEEFPGSLRMATIDDNPWEKYVG.

His5 is a catalytic residue. Glu25 and Asp27 together coordinate Mg(2+). His41 acts as the Nucleophile in catalysis. Intrachain disulfides connect Cys45-Cys51 and Cys47-Cys189. Asp85 contacts Mg(2+).

This sequence belongs to the arthropod phospholipase D family. Class II subfamily. Mg(2+) is required as a cofactor. Expressed by the venom gland.

The protein resides in the secreted. It carries out the reaction an N-(acyl)-sphingosylphosphocholine = an N-(acyl)-sphingosyl-1,3-cyclic phosphate + choline. The catalysed reaction is an N-(acyl)-sphingosylphosphoethanolamine = an N-(acyl)-sphingosyl-1,3-cyclic phosphate + ethanolamine. The enzyme catalyses a 1-acyl-sn-glycero-3-phosphocholine = a 1-acyl-sn-glycero-2,3-cyclic phosphate + choline. It catalyses the reaction a 1-acyl-sn-glycero-3-phosphoethanolamine = a 1-acyl-sn-glycero-2,3-cyclic phosphate + ethanolamine. In terms of biological role, dermonecrotic toxins cleave the phosphodiester linkage between the phosphate and headgroup of certain phospholipids (sphingolipid and lysolipid substrates), forming an alcohol (often choline) and a cyclic phosphate. This toxin acts on sphingomyelin (SM). It may also act on ceramide phosphoethanolamine (CPE), lysophosphatidylcholine (LPC) and lysophosphatidylethanolamine (LPE), but not on lysophosphatidylserine (LPS), and lysophosphatidylglycerol (LPG). It acts by transphosphatidylation, releasing exclusively cyclic phosphate products as second products. Induces dermonecrosis, hemolysis, increased vascular permeability, edema, inflammatory response, and platelet aggregation. The chain is Dermonecrotic toxin LspiSicTox-betaIII2 from Loxosceles spinulosa (Recluse spider).